We begin with the raw amino-acid sequence, 261 residues long: Metallo-beta-lactamase fold-containing protein ST1585 (261 aa).

Residues H58, H60, D62, H63, H148, D165, and H207 each contribute to the Zn(2+) site.

It belongs to the metallo-beta-lactamase superfamily. Monomer.

The chain is Metallo-beta-lactamase fold-containing protein ST1585 from Sulfurisphaera tokodaii (strain DSM 16993 / JCM 10545 / NBRC 100140 / 7) (Sulfolobus tokodaii).